Consider the following 333-residue polypeptide: Threonine-phosphate decarboxylase (333 aa).

The residue at position 199 (Lys-199) is an N6-(pyridoxal phosphate)lysine.

This sequence belongs to the class-I pyridoxal-phosphate-dependent aminotransferase family. Homodimer. Pyridoxal 5'-phosphate serves as cofactor.

The protein resides in the cytoplasm. The enzyme catalyses O-phospho-L-threonine + H(+) = (R)-1-aminopropan-2-yl phosphate + CO2. It functions in the pathway cofactor biosynthesis; adenosylcobalamin biosynthesis. Decarboxylates L-threonine-O-3-phosphate to yield (R)-1-amino-2-propanol O-2-phosphate, the precursor for the linkage between the nucleotide loop and the corrin ring in cobalamin. In Sinorhizobium sp, this protein is Threonine-phosphate decarboxylase (cobC).